The following is a 210-amino-acid chain: Large ribosomal subunit protein uL3 (210 aa).

Residues 125–151 (RHGQSRGPMSHGSRYHRRPGSMGPVAP) are disordered.

It belongs to the universal ribosomal protein uL3 family. In terms of assembly, part of the 50S ribosomal subunit. Forms a cluster with proteins L14 and L19.

Functionally, one of the primary rRNA binding proteins, it binds directly near the 3'-end of the 23S rRNA, where it nucleates assembly of the 50S subunit. The polypeptide is Large ribosomal subunit protein uL3 (Bacillus cereus (strain ATCC 14579 / DSM 31 / CCUG 7414 / JCM 2152 / NBRC 15305 / NCIMB 9373 / NCTC 2599 / NRRL B-3711)).